The primary structure comprises 220 residues: Large ribosomal subunit protein uL3 (220 aa).

The interval 61 to 81 (KGSKSNKYANKPAEGHAKKAD) is disordered.

This sequence belongs to the universal ribosomal protein uL3 family. Part of the 50S ribosomal subunit. Forms a cluster with proteins L14 and L19.

In terms of biological role, one of the primary rRNA binding proteins, it binds directly near the 3'-end of the 23S rRNA, where it nucleates assembly of the 50S subunit. This Staphylococcus epidermidis (strain ATCC 12228 / FDA PCI 1200) protein is Large ribosomal subunit protein uL3.